Reading from the N-terminus, the 173-residue chain is MQTIILGGGCFWCTESVFLSVKGVESVISGYMGGNAVSANYEAVCGGDTGHIEVIKVKFNESTVPLEVILDVFFATHDPTTMDRQANDVGSQYRSVVFYTDETQKPTVDRTINKLRDMGINIVTEVHPAVEFYQAEDTHQDFFNRNPGQAYCNFAIPPKLAKLRKEFSQYMVS.

Cysteine 10 is an active-site residue.

Belongs to the MsrA Met sulfoxide reductase family.

The catalysed reaction is L-methionyl-[protein] + [thioredoxin]-disulfide + H2O = L-methionyl-(S)-S-oxide-[protein] + [thioredoxin]-dithiol. It carries out the reaction [thioredoxin]-disulfide + L-methionine + H2O = L-methionine (S)-S-oxide + [thioredoxin]-dithiol. Its function is as follows. Has an important function as a repair enzyme for proteins that have been inactivated by oxidation. Catalyzes the reversible oxidation-reduction of methionine sulfoxide in proteins to methionine. The chain is Peptide methionine sulfoxide reductase MsrA from Psychrobacter arcticus (strain DSM 17307 / VKM B-2377 / 273-4).